Reading from the N-terminus, the 468-residue chain is ATP synthase subunit beta (468 aa).

Residue 155-162 (GGAGVGKT) participates in ATP binding.

It belongs to the ATPase alpha/beta chains family. In terms of assembly, F-type ATPases have 2 components, CF(1) - the catalytic core - and CF(0) - the membrane proton channel. CF(1) has five subunits: alpha(3), beta(3), gamma(1), delta(1), epsilon(1). CF(0) has three main subunits: a(1), b(2) and c(9-12). The alpha and beta chains form an alternating ring which encloses part of the gamma chain. CF(1) is attached to CF(0) by a central stalk formed by the gamma and epsilon chains, while a peripheral stalk is formed by the delta and b chains.

The protein resides in the cell membrane. The enzyme catalyses ATP + H2O + 4 H(+)(in) = ADP + phosphate + 5 H(+)(out). In terms of biological role, produces ATP from ADP in the presence of a proton gradient across the membrane. The catalytic sites are hosted primarily by the beta subunits. In Streptococcus gordonii (strain Challis / ATCC 35105 / BCRC 15272 / CH1 / DL1 / V288), this protein is ATP synthase subunit beta.